The primary structure comprises 171 residues: UPF0098 protein aq_1250 (171 aa).

It belongs to the UPF0098 family.

The chain is UPF0098 protein aq_1250 from Aquifex aeolicus (strain VF5).